Here is a 26-residue protein sequence, read N- to C-terminus: Glycyl-poneratoxin (26 aa).

Arg-25 is subject to Arginine amide; in delta-paraponeritoxin-Pc1a.

In terms of processing, the glycine-PoTx is a non-amidated form of poneratoxin, with an extra-Gly at C-terminus. This loss of amidation does not alter toxin activity on Nav1.7/SCN9A. Expressed by the venom gland.

It localises to the secreted. Functionally, toxin that causes pain in vertebrates by targeting tetrodotoxin (TTX)-sensitive sodium channels in peripheral sensory neurons. Also blocks synaptic transmission and stimulates smooth muscle contraction. Converts the normally rapidly activating and inactivating sodium channel current into one that does not inactivate. Is active on both Nav1.6/SCN8A and Nav1.7/SCN9A sodium channels, with a much potent activity on Nav1.6/SCN8A (EC(50)=97 nM on human channels) than on Nav1.7/SCN9A (EC(50)=2.3 uM on human and EC(50)=1.8 uM on mouse channels). On these channels, causes a sustained current, a reduction in peak current amplitude and a hyperpolarising shift. Modulates Nav1.7/SCN9A in a non-competitive manner with TTX or tetracaine. Toxin-induced persistant current is very slowly reversible with repeated wash steps over 30 minutes. In vivo, shallow intraplantar injection in mice causes immediate, long-lasting and near-maximal nocifensive behaviors, which decrease with coinjection of TTX. When tested on insects, causes paralysis but not mortality at high doses. The chain is Glycyl-poneratoxin from Paraponera clavata (Bullet ant).